A 434-amino-acid chain; its full sequence is 23S rRNA (uracil(1939)-C(5))-methyltransferase RlmD (434 aa).

The TRAM domain maps to 10 to 68 (RVTTRQIITVTVNDLDPFGQGVARHQGKALFVSGVLPQEQAEVVLVEDKKQYARAQVKR). [4Fe-4S] cluster contacts are provided by C81, C87, C90, and C162. 6 residues coordinate S-adenosyl-L-methionine: Q265, F294, N299, E315, N342, and D363. C389 functions as the Nucleophile in the catalytic mechanism.

This sequence belongs to the class I-like SAM-binding methyltransferase superfamily. RNA M5U methyltransferase family. RlmD subfamily.

The catalysed reaction is uridine(1939) in 23S rRNA + S-adenosyl-L-methionine = 5-methyluridine(1939) in 23S rRNA + S-adenosyl-L-homocysteine + H(+). In terms of biological role, catalyzes the formation of 5-methyl-uridine at position 1939 (m5U1939) in 23S rRNA. The protein is 23S rRNA (uracil(1939)-C(5))-methyltransferase RlmD of Klebsiella pneumoniae (strain 342).